The chain runs to 252 residues: Triosephosphate isomerase (252 aa).

Residue 10 to 12 (NWK) participates in substrate binding. The active-site Electrophile is histidine 96. The active-site Proton acceptor is glutamate 168. Residues glycine 174, serine 214, and 235–236 (GG) each bind substrate.

The protein belongs to the triosephosphate isomerase family. As to quaternary structure, homodimer.

Its subcellular location is the cytoplasm. It catalyses the reaction D-glyceraldehyde 3-phosphate = dihydroxyacetone phosphate. It functions in the pathway carbohydrate biosynthesis; gluconeogenesis. The protein operates within carbohydrate degradation; glycolysis; D-glyceraldehyde 3-phosphate from glycerone phosphate: step 1/1. Involved in the gluconeogenesis. Catalyzes stereospecifically the conversion of dihydroxyacetone phosphate (DHAP) to D-glyceraldehyde-3-phosphate (G3P). In Streptococcus pyogenes serotype M1, this protein is Triosephosphate isomerase.